Reading from the N-terminus, the 200-residue chain is Cleavage and polyadenylation specificity factor subunit 5 (200 aa).

One can recognise a Nudix hydrolase domain in the interval 45-170 (LRKAVEGIII…LSLIAVSLYE (126 aa)). The interaction with RNA stretch occupies residues 70-72 (NYF). The short motif at 77 to 98 (GKLKPGENEIDGLIRKLTKKLS) is the Nudix box element.

This sequence belongs to the Nudix hydrolase family. CPSF5 subfamily. Homodimer (via N- and C-terminus); binds RNA as homodimer. Component of the cleavage factor Im (CFIm) complex.

The protein localises to the nucleus. It localises to the cytoplasm. In terms of biological role, component of the cleavage factor Im (CFIm) complex that functions as an activator of the pre-mRNA 3'-end cleavage and polyadenylation processing required for the maturation of pre-mRNA into functional mRNAs. CFIm contributes to the recruitment of multiprotein complexes on specific sequences on the pre-mRNA 3'-end, so called cleavage and polyadenylation signals (pA signals). Most pre-mRNAs contain multiple pA signals, resulting in alternative cleavage and polyadenylation (APA) producing mRNAs with variable 3'-end formation. The CFIm complex acts as a key regulator of cleavage and polyadenylation site choice during APA through its binding to 5'-UGUA-3' elements localized in the 3'-untranslated region (UTR) for a huge number of pre-mRNAs. Binds to 5'-UGUA-3' elements localized upstream of pA signals that act as enhancers of pre-mRNA 3'-end processing. The homodimer mediates simultaneous sequence-specific recognition of two 5'-UGUA-3' elements within the pre-mRNA. Plays a role in somatic cell fate transitions and pluripotency by regulating widespread changes in gene expression through an APA-dependent function. Binds to chromatin. The sequence is that of Cleavage and polyadenylation specificity factor subunit 5 from Dictyostelium discoideum (Social amoeba).